A 188-amino-acid polypeptide reads, in one-letter code: Protein-export protein SecB (188 aa).

2 disordered regions span residues 1–21 and 160–188; these read MADE…EQPK and RQKA…DTQQ. A compositionally biased stretch (polar residues) spans 176–188; that stretch reads SDSTAAQGSDTQQ.

It belongs to the SecB family. Homotetramer, a dimer of dimers. One homotetramer interacts with 1 SecA dimer.

It is found in the cytoplasm. Functionally, one of the proteins required for the normal export of preproteins out of the cell cytoplasm. It is a molecular chaperone that binds to a subset of precursor proteins, maintaining them in a translocation-competent state. It also specifically binds to its receptor SecA. In Alkalilimnicola ehrlichii (strain ATCC BAA-1101 / DSM 17681 / MLHE-1), this protein is Protein-export protein SecB.